Here is a 274-residue protein sequence, read N- to C-terminus: AA9 family lytic polysaccharide monooxygenase A (274 aa).

Residues 1–22 (MHVPQFISTGALLALLARPAAA) form the signal peptide. Cu(2+) is bound at residue His23. Cysteines 63 and 194 form a disulfide. Positions 67, 98, and 100 each coordinate (1,4-beta-D-glucosyl)n. His101 serves as a coordination point for Cu(2+). His174 is a binding site for O2. A (1,4-beta-D-glucosyl)n-binding site is contributed by Asp177. Residue Tyr191 coordinates Cu(2+).

This sequence belongs to the polysaccharide monooxygenase AA9 family. Requires Cu(2+) as cofactor.

It is found in the secreted. The enzyme catalyses [(1-&gt;4)-beta-D-glucosyl]n+m + reduced acceptor + O2 = 4-dehydro-beta-D-glucosyl-[(1-&gt;4)-beta-D-glucosyl]n-1 + [(1-&gt;4)-beta-D-glucosyl]m + acceptor + H2O.. Functionally, lytic polysaccharide monooxygenase (LPMO) that depolymerizes crystalline and amorphous polysaccharides via the oxidation of scissile alpha- or beta-(1-4)-glycosidic bonds, yielding C4 oxidation products. Catalysis by LPMOs requires the reduction of the active-site copper from Cu(II) to Cu(I) by a reducing agent and H(2)O(2) or O(2) as a cosubstrate. Cleaves a range of polysaccharides, including cellulose, xyloglucan, mixed-linkage glucan and glucomannan. This Collariella virescens (Soil fungus) protein is AA9 family lytic polysaccharide monooxygenase A.